A 353-amino-acid chain; its full sequence is N-acetyl-gamma-glutamyl-phosphate reductase (353 aa).

Residue C157 is part of the active site.

The protein belongs to the NAGSA dehydrogenase family. Type 1 subfamily.

The protein resides in the cytoplasm. The catalysed reaction is N-acetyl-L-glutamate 5-semialdehyde + phosphate + NADP(+) = N-acetyl-L-glutamyl 5-phosphate + NADPH + H(+). It participates in amino-acid biosynthesis; L-arginine biosynthesis; N(2)-acetyl-L-ornithine from L-glutamate: step 3/4. Functionally, catalyzes the NADPH-dependent reduction of N-acetyl-5-glutamyl phosphate to yield N-acetyl-L-glutamate 5-semialdehyde. In Bordetella avium (strain 197N), this protein is N-acetyl-gamma-glutamyl-phosphate reductase.